Reading from the N-terminus, the 299-residue chain is MFNTNRVRIAMQKTGRLSSESIKLLTCCGIKINLKQQKLIAFAENMPIDVMLVRDDDIPGLVMDGVVDLGIVGENVLQEELLHRISQNLENSYITLRRLDFGICRLSLAIPINTPYVDITSLKNFRIATSYPHLLKKYLDSKNIVFKSCMLNGSVEVAPRAGLADAICDLVSTGATLEANGLREVQVVFRSHACLICKTGNINFAKKEVINKLMTRIKGVIKARESKYIMLHAPVNKLEEVISLLHGAEKPTILKLAGDDHRVAMHMVSSETLFWETMEKLKSLGASSILVLPIEKMME.

The protein belongs to the ATP phosphoribosyltransferase family. Long subfamily. As to quaternary structure, equilibrium between an active dimeric form, an inactive hexameric form and higher aggregates. Interconversion between the various forms is largely reversible and is influenced by the natural substrates and inhibitors of the enzyme. It depends on Mg(2+) as a cofactor.

It is found in the cytoplasm. It catalyses the reaction 1-(5-phospho-beta-D-ribosyl)-ATP + diphosphate = 5-phospho-alpha-D-ribose 1-diphosphate + ATP. The protein operates within amino-acid biosynthesis; L-histidine biosynthesis; L-histidine from 5-phospho-alpha-D-ribose 1-diphosphate: step 1/9. Its activity is regulated as follows. Feedback inhibited by histidine. Catalyzes the condensation of ATP and 5-phosphoribose 1-diphosphate to form N'-(5'-phosphoribosyl)-ATP (PR-ATP). Has a crucial role in the pathway because the rate of histidine biosynthesis seems to be controlled primarily by regulation of HisG enzymatic activity. The protein is ATP phosphoribosyltransferase (hisG) of Buchnera aphidicola subsp. Schizaphis graminum (strain Sg).